The chain runs to 247 residues: tRNA pseudouridine synthase A (247 aa).

Residue Asp52 is the Nucleophile of the active site. Position 113 (Tyr113) interacts with substrate.

This sequence belongs to the tRNA pseudouridine synthase TruA family. In terms of assembly, homodimer.

It carries out the reaction uridine(38/39/40) in tRNA = pseudouridine(38/39/40) in tRNA. Functionally, formation of pseudouridine at positions 38, 39 and 40 in the anticodon stem and loop of transfer RNAs. This Bartonella tribocorum (strain CIP 105476 / IBS 506) protein is tRNA pseudouridine synthase A.